The chain runs to 283 residues: Bifunctional protein FolD 2 (283 aa).

NADP(+)-binding positions include 165-167 (GRG), Thr192, and Val233.

This sequence belongs to the tetrahydrofolate dehydrogenase/cyclohydrolase family. As to quaternary structure, homodimer.

It catalyses the reaction (6R)-5,10-methylene-5,6,7,8-tetrahydrofolate + NADP(+) = (6R)-5,10-methenyltetrahydrofolate + NADPH. The catalysed reaction is (6R)-5,10-methenyltetrahydrofolate + H2O = (6R)-10-formyltetrahydrofolate + H(+). The protein operates within one-carbon metabolism; tetrahydrofolate interconversion. In terms of biological role, catalyzes the oxidation of 5,10-methylenetetrahydrofolate to 5,10-methenyltetrahydrofolate and then the hydrolysis of 5,10-methenyltetrahydrofolate to 10-formyltetrahydrofolate. The protein is Bifunctional protein FolD 2 of Saccharopolyspora erythraea (strain ATCC 11635 / DSM 40517 / JCM 4748 / NBRC 13426 / NCIMB 8594 / NRRL 2338).